The sequence spans 224 residues: UPF0758 protein CBUD_1789 (224 aa).

Residues 102 to 224 (QLGCTQDAQQ…SFSFAESGLL (123 aa)) enclose the MPN domain. Zn(2+) contacts are provided by histidine 173, histidine 175, and aspartate 186. A JAMM motif motif is present at residues 173 to 186 (HNHPSGVPDPSQAD).

It belongs to the UPF0758 family.

This chain is UPF0758 protein CBUD_1789, found in Coxiella burnetii (strain Dugway 5J108-111).